The primary structure comprises 554 residues: DnaJ homolog subfamily C member 1 (554 aa).

The first 47 residues, 1 to 47 (MTAPCSQPAQLPGRRQLGLVPFPPPPPRTPLLWLLLLLLAAVAPARG), serve as a signal peptide directing secretion. Residues 48–153 (WESGDLELFD…RRVRKMSNAE (106 aa)) are Lumenal-facing. The J domain occupies 65–129 (NFYQFLGVQQ…ERRQRYDDIL (65 aa)). The chain crosses the membrane as a helical span at residues 154 to 174 (LALLLFIILTVGHYAVVWSIY). The Cytoplasmic portion of the chain corresponds to 175–554 (LEKQLDELLS…LVQKKKQAKS (380 aa)). The region spanning 325-379 (KQAPEWTEEDLSQLTRSMVKFPGGTPGRWEKIAHELGRSVTDVTTKAKQLKDSVT) is the SANT 1 domain. Position 381 is a phosphoserine (Ser381). The span at 392–405 (STVQNSRPIKTATT) shows a compositional bias: polar residues. A disordered region spans residues 392–500 (STVQNSRPIK…RSAEEPWTQN (109 aa)). Residues 421–432 (AAEEEQEGDSGE) show a composition bias toward acidic residues. Phosphoserine is present on Ser430. Basic and acidic residues predominate over residues 455–472 (AKPEPEEKSRAKRQKDFD). A compositionally biased stretch (acidic residues) spans 473 to 482 (IAEQNESSDE). 4 positions are modified to phosphoserine: Ser479, Ser480, Ser484, and Ser492. Residues 483-494 (ESLRKERARSAE) show a composition bias toward basic and acidic residues. In terms of domain architecture, SANT 2 spans 492-547 (SAEEPWTQNQQKLLELALQQYPRGSSDRWDKIARCVPSKSKEDCIARYKLLVELVQ).

Interacts (via J domain) with HSPA5. Interacts (via cytosolic domain) with ribosomes. Interacts (via SANT 2 domain) with SERPINA3; the interaction delays the formation of the covalent inhibitory complex SERPINA3-chymotrypsin, but does not alter the catalytic activity of SERPINA3. Interacts (via SANT 2 domain) with ITIH4 (via C-terminus); the interaction protects ITIH4 against in vitro cleavage by kallikrein.

Its subcellular location is the endoplasmic reticulum membrane. It is found in the nucleus membrane. It localises to the microsome membrane. Its function is as follows. May modulate protein synthesis. The protein is DnaJ homolog subfamily C member 1 (DNAJC1) of Homo sapiens (Human).